The chain runs to 3938 residues: Protein bassoon (3938 aa).

Residues 1–158 are disordered; it reads MGNEASLEGG…PTSPYSVPQI (158 aa). Residue G2 is the site of N-myristoyl glycine attachment. A compositionally biased stretch (gly residues) spans 9–29; that stretch reads GGAGEGPLPPGGSGLGPGPGA. Low complexity predominate over residues 31 to 61; that stretch reads KPPSALAGGGQLPVAGAARAAGPPTPGLGLV. The interval 62-70 is 4 X 2 AA tandem repeats of P-G; it reads PGPGPGPGP. Polar residues-rich tracts occupy residues 86–98 and 127–154; these read QRAT…QASA and QVDS…SPYS. S142 carries the post-translational modification Phosphoserine. Omega-N-methylarginine is present on R145. 2 consecutive C4-type zinc fingers follow at residues 167 to 190 and 195 to 217; these read CPIC…CTQC and CNQC…CLNC. Disordered regions lie at residues 228–346 and 361–456; these read TTAP…LTGK and LMSV…KTMP. Residues 230–240 are compositionally biased toward polar residues; the sequence is APRSKSQQQLH. A phosphoserine mark is found at S241 and S245. The segment covering 361 to 376 has biased composition (polar residues); it reads LMSVQPEADTQGQPSP. The segment covering 394–406 has biased composition (pro residues); it reads PRPPGSGPGPGPT. C4-type zinc fingers lie at residues 462 to 485 and 490 to 512; these read CPLC…CTAC and CTLC…CLNC. Disordered stretches follow at residues 523-921, 934-1247, 1294-1541, and 1561-1611; these read GEPA…LQGG, GRLW…TPAG, MDPM…WQQS, and RMVH…RAPS. Positions 526–539 are enriched in pro residues; sequence APLPLPTPQEPPAG. The segment covering 548–589 has biased composition (low complexity); it reads SPLKQKGPQGPGQPSGSLPPKASPQAAKASPQAAKASPQAKP. Repeat copies occupy residues 568–574, 575–581, and 582–588. Residues 568–588 are 3 X 7 AA tandem repeats of K-A-S-P-Q-A-[AK]; sequence KASPQAAKASPQAAKASPQAK. Positions 616–629 are enriched in pro residues; sequence VPKPPPETAVPPGT. A compositionally biased stretch (polar residues) spans 668 to 677; the sequence is QDLSRSPQSL. Low complexity predominate over residues 678 to 692; the sequence is SDTGYSSDGVSSSQS. Residues 693–702 are compositionally biased toward polar residues; sequence EITGVVQQEV. Composition is skewed to acidic residues over residues 769 to 784 and 847 to 858; these read FDSD…EDDS and SAEEDNLEEDDT. R863 carries the omega-N-methylarginine modification. S965 is subject to Phosphoserine. Residues 979–996 are compositionally biased toward low complexity; that stretch reads PASTPSYTSGTSPTSLSS. A coiled-coil region spans residues 1032–1087; sequence IEDSSEEEELREEEELLREQEKMREVEQQRIRSTARKTRRDKEELRAQRRRERSKT. Residues 1034-1047 are compositionally biased toward acidic residues; that stretch reads DSSEEEELREEEEL. Phosphoserine occurs at positions 1035 and 1036. Over residues 1048–1061 the composition is skewed to basic and acidic residues; the sequence is LREQEKMREVEQQR. Position 1085 is a phosphoserine (S1085). Phosphothreonine is present on T1087. Residues S1093 and S1099 each carry the phosphoserine modification. The segment covering 1102 to 1117 has biased composition (basic and acidic residues); that stretch reads EELRQAAEMEELHRSS. Low complexity-rich tracts occupy residues 1118–1128 and 1158–1175; these read CSEYSPSPSLD and SPTE…SGRP. A coiled-coil region spans residues 1176-1203; that stretch reads LKSAEEAYEDMMRKAELLQRQQGQAAGA. Residues 1177–1192 are compositionally biased toward basic and acidic residues; that stretch reads KSAEEAYEDMMRKAEL. The span at 1194–1204 shows a compositional bias: low complexity; that stretch reads QRQQGQAAGAR. Residues 1211–1224 show a composition bias toward polar residues; it reads SQPTGPRSQGSFEY. The residue at position 1221 (S1221) is a Phosphoserine. Positions 1318-1328 are enriched in low complexity; that stretch reads SFPTSTSSDSS. Residue T1339 is glycosylated (O-linked (GlcNAc) threonine). Residues 1342-1351 are compositionally biased toward basic and acidic residues; that stretch reads FAKEPQEPLK. Composition is skewed to low complexity over residues 1352–1364 and 1374–1386; these read LHSS…LASK and PGTP…APCP. O-linked (GlcNAc) threonine glycosylation occurs at T1380. The segment covering 1402–1426 has biased composition (polar residues); the sequence is SPSTSSTIHSYGQPPTTANYGSQTE. Phosphoserine is present on residues S1470, S1479, and S1481. Over residues 1476-1487 the composition is skewed to low complexity; sequence STPSESPTFSPS. Composition is skewed to polar residues over residues 1496-1510 and 1561-1597; these read EFST…SSDI and RMVH…SQMP. 2 positions are modified to omega-N-methylarginine: R1780 and R1784. R1794 bears the Asymmetric dimethylarginine; alternate mark. R1794 is modified (omega-N-methylarginine; alternate). At R1806 the chain carries Omega-N-methylarginine. Residues 1914-1964 are disordered; it reads PSAPDKSVTDAALPGQSSGPFYSPRDPEPPEPLTFRAQGVVGPGPHEEQRP. The O-linked (GlcNAc) threonine glycan is linked to T1922. Phosphoserine occurs at positions 1978 and 2034. An omega-N-methylarginine mark is found at R2039 and R2069. 3 positions are modified to asymmetric dimethylarginine: R2243, R2253, and R2259. The tract at residues 2280 to 2305 is disordered; sequence AAKASGAGGPPRPELPAGGAREEPLS. O-linked (GlcNAc) threonine glycosylation is present at T2307. Disordered stretches follow at residues 2318 to 2343 and 2461 to 2486; these read VAQA…SGVL and EEQK…PPAA. Residues 2345 to 2470 adopt a coiled-coil conformation; the sequence is RPVMEKEEAS…EEQKQRQKAP (126 aa). O-linked (GlcNAc) threonine glycosylation occurs at T2510. A disordered region spans residues 2513 to 2648; it reads PGQAREPVLH…HEASASSSAA (136 aa). Residues 2527 to 2537 are compositionally biased toward polar residues; the sequence is SSASDMSLQTE. S2564 carries the post-translational modification Phosphoserine. Phosphothreonine is present on residues T2581 and T2608. Over residues 2629–2641 the composition is skewed to basic and acidic residues; the sequence is RHSDSGSDSKHEA. The O-linked (GlcNAc) threonine glycan is linked to T2685. Residues 2715–3263 form an interaction with DAO region; sequence EPDGQAQGVA…GGVSGRPGKD (549 aa). 3 positions are modified to phosphoserine: S2796, S2845, and S2851. Residues 2839 to 2859 are disordered; that stretch reads TLQRSLSDPKPLSPTAEESAK. Residue T2930 is glycosylated (O-linked (GlcNAc) threonine). Residues 2933–2975 are a coiled coil; the sequence is SLLRELDRDLRLVEHESTKLRKKQAELDEEEKEIDAKLKYLEL. The interval 2934–2996 is sufficient for binding to ERC2; the sequence is LLRELDRDLR…DRVGRDYPPL (63 aa). Residue S3007 is modified to Phosphoserine. Over residues 3055–3068 the composition is skewed to polar residues; it reads TQYTAGSSGPTQNG. Disordered regions lie at residues 3055-3148, 3162-3399, 3414-3546, and 3569-3910; these read TQYT…ADLE, AVTV…SRKF, QQRY…PRAH, and YHLG…VFSK. The segment covering 3184–3196 has biased composition (basic and acidic residues); the sequence is EHGKAPEHPRGGD. The span at 3198–3222 shows a compositional bias: polar residues; sequence SSVSQSPAPTYPSDSHYTSLEQNVP. S3286 is modified (phosphoserine). Residues 3304–3315 show a composition bias toward polar residues; it reads ESNGRPASTHYY. Composition is skewed to basic and acidic residues over residues 3316-3328, 3358-3377, and 3450-3469; these read SDSD…RADK, QGME…KDVE, and LSSH…RETA. S3368 is modified (phosphoserine). R3488 carries the omega-N-methylarginine modification. Residues 3506–3520 are compositionally biased toward low complexity; that stretch reads PLGRPRPAGGALPPG. 2 stretches are compositionally biased toward basic and acidic residues: residues 3535–3546 and 3578–3588; these read VQEHVKDGPRAH and WFDKPRDARSD. Basic residues predominate over residues 3638–3651; it reads EHRHHGDHGRHSGR. Basic and acidic residues predominate over residues 3652 to 3676; it reads HAGEEPGRRAARPHARDMGRHETRP. A compositionally biased stretch (low complexity) spans 3751–3820; that stretch reads PQQSQPPSSR…ARLQQQSQPT (70 aa). Positions 3772-3803 form a coiled coil; sequence QTQQQQQQQQQQQQQQQQQQQQQQQQGLGQQA. R3822 carries the omega-N-methylarginine modification. Residues 3834-3848 are compositionally biased toward pro residues; that stretch reads KPQPGPTTAPGPQPA. 2 stretches are compositionally biased toward low complexity: residues 3860–3887 and 3894–3904; these read KPAA…KTGA and GAPAGQPAAEG.

In terms of assembly, interacts with PCLO, ERC2/CAST1, RIMS1 and UNC13A. Interacts with TPRG1L. Interacts with DYNLL1 and DYNLL2; these interactions potentially link PTVs to dynein and myosin V motor complexes. Interacts with ATG5; this interaction is important for the regulation of presynaptic autophagy. Interacts (via C-terminus) with TRIO (via N-terminus). Interacts with CTBP1. Interacts with SIAH1; this interaction negatively regulates SIAH1 E3 ligase activity. Interacts (via coiled region) with DAO; the interaction is direct. Post-translationally, myristoylated. The N-terminal myristoylation is not sufficient for presynaptic localization. As to expression, detected at synapses in the stratum lucidum in the hippocampus CA3 region (at protein level).

The protein localises to the cytoplasm. Its subcellular location is the presynaptic active zone. It is found in the cytoskeleton. It localises to the cytoplasmic vesicle. The protein resides in the secretory vesicle. The protein localises to the synaptic vesicle membrane. Scaffold protein of the presynaptic cytomatrix at the active zone (CAZ) which is the place in the synapse where neurotransmitter is released. After synthesis, participates in the formation of Golgi-derived membranous organelles termed Piccolo-Bassoon transport vesicles (PTVs) that are transported along axons to sites of nascent synaptic contacts. At the presynaptic active zone, regulates the spatial organization of synaptic vesicle cluster, the protein complexes that execute membrane fusion and compensatory endocytosis. Also functions in processes other than assembly such as the regulation of specific presynaptic protein ubiquitination by interacting with SIAH1 or the regulation of presynaptic autophagy by associating with ATG5. Also mediates synapse to nucleus communication leading to reconfiguration of gene expression by associating with the transcriptional corepressor CTBP1 and by subsequently reducing the size of its pool available for nuclear import. Inhibits the activity of the proportion of DAO enzyme that localizes to the presynaptic active zone, which may modulate synaptic transmission. The polypeptide is Protein bassoon (Rattus norvegicus (Rat)).